The chain runs to 193 residues: ECF RNA polymerase sigma factor SigK (193 aa).

Residues 35–101 form a sigma-70 factor domain-2 region; sequence LYDRTRSRVY…RRAVDRVRSE (67 aa). The Polymerase core binding signature appears at 59–62; the sequence is ETTQ. The tract at residues 140–187 is sigma-70 factor domain-4; that stretch reads MGSLSDLQREAIQLAYYEGLTYVQVSERLSANLATIKSRMRDGIRGLK. The segment at residues 161–180 is a DNA-binding region (H-T-H motif); that stretch reads YVQVSERLSANLATIKSRMR.

Belongs to the sigma-70 factor family. ECF subfamily. In terms of assembly, interacts transiently with the RNA polymerase catalytic core formed by RpoA, RpoB, RpoC and RpoZ (2 alpha, 1 beta, 1 beta' and 1 omega subunit) to form the RNA polymerase holoenzyme that can initiate transcription. Interacts (via sigma-70 factor domain 4) with anti-sigma-K factor RskA.

Its function is as follows. Sigma factors are initiation factors that promote the attachment of RNA polymerase to specific initiation sites and are then released. Extracytoplasmic function (ECF) sigma factors are held in an inactive form by an anti-sigma factor until released by regulated intramembrane proteolysis. The chain is ECF RNA polymerase sigma factor SigK (sigK) from Mycobacterium sp. (strain JLS).